The sequence spans 133 residues: Holo-[acyl-carrier-protein] synthase (133 aa).

Mg(2+)-binding residues include Asp-8 and Glu-57.

Belongs to the P-Pant transferase superfamily. AcpS family. The cofactor is Mg(2+).

Its subcellular location is the cytoplasm. It carries out the reaction apo-[ACP] + CoA = holo-[ACP] + adenosine 3',5'-bisphosphate + H(+). Functionally, transfers the 4'-phosphopantetheine moiety from coenzyme A to a Ser of acyl-carrier-protein. This is Holo-[acyl-carrier-protein] synthase from Chelativorans sp. (strain BNC1).